The chain runs to 322 residues: Carnosine N-methyltransferase 2 (322 aa).

Residue E58 participates in substrate binding. S-adenosyl-L-methionine-binding residues include G90, E119, S150, and I172. N313 contacts substrate.

It belongs to the class I-like SAM-binding methyltransferase superfamily. HNMT family. As to quaternary structure, monomer.

The catalysed reaction is carnosine + S-adenosyl-L-methionine = anserine + S-adenosyl-L-homocysteine + H(+). In terms of biological role, N-methyltransferase that mediates the formation of anserine (beta-alanyl-N(Pi)-methyl-L-histidine) from carnosine. Anserine, a methylated derivative of carnosine (beta-alanyl-L-histidine), is an abundant constituent of vertebrate skeletal muscles. In Gallus gallus (Chicken), this protein is Carnosine N-methyltransferase 2.